Consider the following 210-residue polypeptide: Thymidylate kinase (210 aa).

An ATP-binding site is contributed by 10–17; the sequence is GPEGAGKS.

This sequence belongs to the thymidylate kinase family.

The catalysed reaction is dTMP + ATP = dTDP + ADP. Phosphorylation of dTMP to form dTDP in both de novo and salvage pathways of dTTP synthesis. This chain is Thymidylate kinase, found in Pseudomonas aeruginosa (strain UCBPP-PA14).